Consider the following 424-residue polypeptide: MFIDTAKIFVKSGKGGDGSISFRREKYIAFGGPDGGDGGKGGNVVLVVDPNMTTLLDFTYKRKYKAEPGGNGAGSKCFGKNGKDLHIKVPMGTIVKDAETDKIMADLSKPEDSYVVAKGGRGGKGNCRFTTPTRQAPDFAEPGMPEEERWIKLELKLLADVGLIGFPNVGKSTLLSVVSKARPKIANYHFTTLKPNLGVVSIEGVNNFVIADIPGIIEGASEGVGLGLDFLRHVERTRVLIHVIDISSVEGRDPYDDFLKINDELKRYSVKLYDRPQIIAANKSDMLFDEEKFEEFKTKVEKHGYNKVFKISAATKQGVDDLMKEAARLLSTIPVTDLEISEEDRFIEEEKRFTYSIRKEDNTYIVEGSFVDRLLNAVNVNDPDDLRYFHKVLKNKGVMEELMEMGIEDGDVVRLNDFEFDFLL.

One can recognise an Obg domain in the interval 1–158 (MFIDTAKIFV…RWIKLELKLL (158 aa)). Positions 159-331 (ADVGLIGFPN…LMKEAARLLS (173 aa)) constitute an OBG-type G domain. Residues 165–172 (GFPNVGKS), 190–194 (FTTLK), 212–215 (DIPG), 282–285 (NKSD), and 312–314 (SAA) each bind GTP. The Mg(2+) site is built by S172 and T192. The OCT domain occupies 345 to 424 (RFIEEEKRFT…LNDFEFDFLL (80 aa)).

It belongs to the TRAFAC class OBG-HflX-like GTPase superfamily. OBG GTPase family. As to quaternary structure, monomer. Mg(2+) is required as a cofactor.

Its subcellular location is the cytoplasm. In terms of biological role, an essential GTPase which binds GTP, GDP and possibly (p)ppGpp with moderate affinity, with high nucleotide exchange rates and a fairly low GTP hydrolysis rate. Plays a role in control of the cell cycle, stress response, ribosome biogenesis and in those bacteria that undergo differentiation, in morphogenesis control. The sequence is that of GTPase Obg from Clostridium botulinum (strain Langeland / NCTC 10281 / Type F).